We begin with the raw amino-acid sequence, 153 residues long: Protein E6 (153 aa).

2 zinc fingers span residues 29 to 65 and 102 to 138; these read CVYC…CEKC and CYIC…CMNC.

This sequence belongs to the papillomaviridae E6 protein family. Forms homodimers. Interacts with ubiquitin-protein ligase UBE3A/E6-AP; this interaction stimulates UBE3A ubiquitin activity. Interacts with host TP53 and EP300; this interaction inhibits TP53 activity.

It localises to the host cytoplasm. Its subcellular location is the host nucleus. Plays a major role in the induction and maintenance of cellular transformation. E6 associates with host UBE3A/E6-AP ubiquitin-protein ligase and modulates its activity. Sequesters tumor suppressor TP53 in the host cytoplasm and modulates its activity by interacting with host EP300 that results in the reduction of TP53 acetylation and activation. In turn, apoptosis induced by DNA damage is inhibited. E6 also protects host keratinocytes from apoptosis by mediating the degradation of host BAK1. May also inhibit host immune response. This Homo sapiens (Human) protein is Protein E6.